We begin with the raw amino-acid sequence, 331 residues long: Betaine-homocysteine S-methyltransferase (331 aa).

The Hcy-binding domain maps to 3–324 (VNQKWNWDTK…TDVLAIRKYV (322 aa)). The Zn(2+) site is built by Cys-243, Cys-309, and Cys-310.

This sequence belongs to the Betaine-homocysteine S-methyltransferase, BHMT family. It depends on Zn(2+) as a cofactor.

It catalyses the reaction L-homocysteine + glycine betaine = N,N-dimethylglycine + L-methionine. Its pathway is amino-acid biosynthesis; L-methionine biosynthesis via de novo pathway. Functionally, involved in the regulation of homocysteine metabolism. Converts betaine and homocysteine to dimethylglycine and methionine, respectively. The polypeptide is Betaine-homocysteine S-methyltransferase (Drosophila melanogaster (Fruit fly)).